The primary structure comprises 180 residues: NADH-quinone oxidoreductase subunit B (180 aa).

The [4Fe-4S] cluster site is built by C59, C60, C124, and C154.

Belongs to the complex I 20 kDa subunit family. In terms of assembly, NDH-1 is composed of 14 different subunits. Subunits NuoB, C, D, E, F, and G constitute the peripheral sector of the complex. [4Fe-4S] cluster serves as cofactor.

The protein resides in the cell inner membrane. The catalysed reaction is a quinone + NADH + 5 H(+)(in) = a quinol + NAD(+) + 4 H(+)(out). NDH-1 shuttles electrons from NADH, via FMN and iron-sulfur (Fe-S) centers, to quinones in the respiratory chain. The immediate electron acceptor for the enzyme in this species is believed to be ubiquinone. Couples the redox reaction to proton translocation (for every two electrons transferred, four hydrogen ions are translocated across the cytoplasmic membrane), and thus conserves the redox energy in a proton gradient. This Beijerinckia indica subsp. indica (strain ATCC 9039 / DSM 1715 / NCIMB 8712) protein is NADH-quinone oxidoreductase subunit B.